Reading from the N-terminus, the 95-residue chain is Small ribosomal subunit protein uS19 (95 aa).

The protein belongs to the universal ribosomal protein uS19 family.

Its function is as follows. Protein S19 forms a complex with S13 that binds strongly to the 16S ribosomal RNA. This chain is Small ribosomal subunit protein uS19, found in Thermodesulfovibrio yellowstonii (strain ATCC 51303 / DSM 11347 / YP87).